We begin with the raw amino-acid sequence, 253 residues long: Methionine-R-sulfoxide reductase B3, mitochondrial (253 aa).

Positions 1-56 (MPPAAPSVARSREGGGIGQRRLVFPKSARRTLPCPIALCLGLCLAAAAATTTRASA) are cleaved as a signal peptide. Position 102 is an N6-acetyllysine (Lys-102). A MsrB domain is found at 107–229 (QQELRKRLTP…NSASLSFTPA (123 aa)). Zn(2+)-binding residues include Cys-146, Cys-149, Cys-195, and Cys-198. Cys-218 acts as the Nucleophile in catalysis. Residues 227 to 253 (TPADSSEAEGSGIKESGSPAAADRAEL) form a disordered region. At Ser-244 the chain carries Phosphoserine. The short motif at 250 to 253 (RAEL) is the Endoplasmic reticulum retention signal element.

It belongs to the MsrB Met sulfoxide reductase family. As to quaternary structure, monomer. Zn(2+) serves as cofactor. In terms of tissue distribution, widely expressed. Detected in the sensory epithelia of the organ of Corti and vestibular end organs as early as P2 up to adulthood (at protein level). In the organ of Corti, present in inner and outer hair cells and, to a lesser extent, in supporting cells (at protein level). In hair cells, distributed throughout the cell body. Barely detectable level in stereocilia. Also observed in spiral ganglion neurons, but not in the stria vascularis. In the vestibular end organs, found throughout the sensory epithelium, but more intense expression in hair cells than in supporting cells (at protein level). In vestibular hair cells, present within cell bodies and to a lesser extent in kinocilia. Barely detectable in stereocilia.

It localises to the endoplasmic reticulum. The catalysed reaction is L-methionyl-[protein] + [thioredoxin]-disulfide + H2O = L-methionyl-(R)-S-oxide-[protein] + [thioredoxin]-dithiol. It carries out the reaction [thioredoxin]-disulfide + L-methionine + H2O = L-methionine (R)-S-oxide + [thioredoxin]-dithiol. In terms of biological role, catalyzes the reduction of free and protein-bound methionine sulfoxide to methionine. The sequence is that of Methionine-R-sulfoxide reductase B3, mitochondrial (Msrb3) from Mus musculus (Mouse).